The sequence spans 354 residues: S-adenosylmethionine:tRNA ribosyltransferase-isomerase (354 aa).

The protein belongs to the QueA family. As to quaternary structure, monomer.

Its subcellular location is the cytoplasm. The enzyme catalyses 7-aminomethyl-7-carbaguanosine(34) in tRNA + S-adenosyl-L-methionine = epoxyqueuosine(34) in tRNA + adenine + L-methionine + 2 H(+). It functions in the pathway tRNA modification; tRNA-queuosine biosynthesis. Transfers and isomerizes the ribose moiety from AdoMet to the 7-aminomethyl group of 7-deazaguanine (preQ1-tRNA) to give epoxyqueuosine (oQ-tRNA). The sequence is that of S-adenosylmethionine:tRNA ribosyltransferase-isomerase from Pseudomonas syringae pv. tomato (strain ATCC BAA-871 / DC3000).